Here is a 225-residue protein sequence, read N- to C-terminus: NAD(P)H-quinone oxidoreductase subunit K, chloroplastic (225 aa).

Positions 43, 44, 108, and 139 each coordinate [4Fe-4S] cluster.

It belongs to the complex I 20 kDa subunit family. As to quaternary structure, NDH is composed of at least 16 different subunits, 5 of which are encoded in the nucleus. [4Fe-4S] cluster is required as a cofactor.

The protein resides in the plastid. It localises to the chloroplast thylakoid membrane. The enzyme catalyses a plastoquinone + NADH + (n+1) H(+)(in) = a plastoquinol + NAD(+) + n H(+)(out). It carries out the reaction a plastoquinone + NADPH + (n+1) H(+)(in) = a plastoquinol + NADP(+) + n H(+)(out). Its function is as follows. NDH shuttles electrons from NAD(P)H:plastoquinone, via FMN and iron-sulfur (Fe-S) centers, to quinones in the photosynthetic chain and possibly in a chloroplast respiratory chain. The immediate electron acceptor for the enzyme in this species is believed to be plastoquinone. Couples the redox reaction to proton translocation, and thus conserves the redox energy in a proton gradient. This Arabis hirsuta (Hairy rock-cress) protein is NAD(P)H-quinone oxidoreductase subunit K, chloroplastic.